A 381-amino-acid polypeptide reads, in one-letter code: Queuine tRNA-ribosyltransferase (381 aa).

Aspartate 89 functions as the Proton acceptor in the catalytic mechanism. Residues 89–93 (DSGGF), aspartate 143, glutamine 187, and glycine 214 contribute to the substrate site. The tract at residues 245-251 (GVGKPED) is RNA binding. The Nucleophile role is filled by aspartate 264. The RNA binding; important for wobble base 34 recognition stretch occupies residues 269–273 (TRNAR). Residues cysteine 302, cysteine 304, cysteine 307, and histidine 333 each contribute to the Zn(2+) site.

The protein belongs to the queuine tRNA-ribosyltransferase family. Homodimer. Within each dimer, one monomer is responsible for RNA recognition and catalysis, while the other monomer binds to the replacement base PreQ1. The cofactor is Zn(2+).

The catalysed reaction is 7-aminomethyl-7-carbaguanine + guanosine(34) in tRNA = 7-aminomethyl-7-carbaguanosine(34) in tRNA + guanine. Its pathway is tRNA modification; tRNA-queuosine biosynthesis. Its function is as follows. Catalyzes the base-exchange of a guanine (G) residue with the queuine precursor 7-aminomethyl-7-deazaguanine (PreQ1) at position 34 (anticodon wobble position) in tRNAs with GU(N) anticodons (tRNA-Asp, -Asn, -His and -Tyr). Catalysis occurs through a double-displacement mechanism. The nucleophile active site attacks the C1' of nucleotide 34 to detach the guanine base from the RNA, forming a covalent enzyme-RNA intermediate. The proton acceptor active site deprotonates the incoming PreQ1, allowing a nucleophilic attack on the C1' of the ribose to form the product. After dissociation, two additional enzymatic reactions on the tRNA convert PreQ1 to queuine (Q), resulting in the hypermodified nucleoside queuosine (7-(((4,5-cis-dihydroxy-2-cyclopenten-1-yl)amino)methyl)-7-deazaguanosine). The chain is Queuine tRNA-ribosyltransferase from Pectobacterium atrosepticum (strain SCRI 1043 / ATCC BAA-672) (Erwinia carotovora subsp. atroseptica).